Here is a 528-residue protein sequence, read N- to C-terminus: Peptide chain release factor 3 (528 aa).

Positions 10–280 (AKRRTFGIIS…IDMAPAPGPR (271 aa)) constitute a tr-type G domain. GTP-binding positions include 19–26 (SHPDAGKT), 87–91 (DTPGH), and 141–144 (NKLD).

Belongs to the TRAFAC class translation factor GTPase superfamily. Classic translation factor GTPase family. PrfC subfamily.

The protein localises to the cytoplasm. Its function is as follows. Increases the formation of ribosomal termination complexes and stimulates activities of RF-1 and RF-2. It binds guanine nucleotides and has strong preference for UGA stop codons. It may interact directly with the ribosome. The stimulation of RF-1 and RF-2 is significantly reduced by GTP and GDP, but not by GMP. This chain is Peptide chain release factor 3, found in Desulfotalea psychrophila (strain LSv54 / DSM 12343).